The following is a 187-amino-acid chain: Phosphatidylethanolamine-binding protein 1 (187 aa).

Phosphoserine is present on residues Ser-6 and Ser-13. The residue at position 42 (Thr-42) is a Phosphothreonine. 4 positions are modified to phosphoserine: Ser-52, Ser-54, Ser-98, and Ser-153. The interaction with RAF1 stretch occupies residues 93-134 (KGNDISSGTVLSDYVGSGPPKGTGLHRYVWLVYEQARPLKCD).

Belongs to the phosphatidylethanolamine-binding protein family. Has a tendency to form dimers by disulfide cross-linking. Interacts with RAF1 and this interaction is enhanced if RAF1 is phosphorylated on residues 'Ser-338', 'Ser-339', 'Tyr-340' and 'Tyr-341'. Interacts with ALOX15; in response to IL13/interleukin-13, prevents the interaction of PEBP1 with RAF1 to activate the ERK signaling cascade.

The protein resides in the cytoplasm. In terms of biological role, binds ATP, opioids and phosphatidylethanolamine. Has lower affinity for phosphatidylinositol and phosphatidylcholine. Serine protease inhibitor which inhibits thrombin, neuropsin and chymotrypsin but not trypsin, tissue type plasminogen activator and elastase. Inhibits the kinase activity of RAF1 by inhibiting its activation and by dissociating the RAF1/MEK complex and acting as a competitive inhibitor of MEK phosphorylation. HCNP may be involved in the function of the presynaptic cholinergic neurons of the central nervous system. HCNP increases the production of choline acetyltransferase but not acetylcholinesterase. Seems to be mediated by a specific receptor. This Macaca fascicularis (Crab-eating macaque) protein is Phosphatidylethanolamine-binding protein 1 (PEBP1).